The primary structure comprises 217 residues: Ribosomal large subunit pseudouridine synthase E (217 aa).

Residue Asp79 is the Nucleophile of the active site.

The protein belongs to the pseudouridine synthase RsuA family.

It catalyses the reaction uridine(2457) in 23S rRNA = pseudouridine(2457) in 23S rRNA. Responsible for synthesis of pseudouridine from uracil-2457 in 23S ribosomal RNA. The chain is Ribosomal large subunit pseudouridine synthase E (rluE) from Escherichia coli O6:H1 (strain CFT073 / ATCC 700928 / UPEC).